We begin with the raw amino-acid sequence, 171 residues long: S-ribosylhomocysteine lyase (171 aa).

The Fe cation site is built by His54, His58, and Cys128.

The protein belongs to the LuxS family. Homodimer. Fe cation serves as cofactor.

The catalysed reaction is S-(5-deoxy-D-ribos-5-yl)-L-homocysteine = (S)-4,5-dihydroxypentane-2,3-dione + L-homocysteine. In terms of biological role, involved in the synthesis of autoinducer 2 (AI-2) which is secreted by bacteria and is used to communicate both the cell density and the metabolic potential of the environment. The regulation of gene expression in response to changes in cell density is called quorum sensing. Catalyzes the transformation of S-ribosylhomocysteine (RHC) to homocysteine (HC) and 4,5-dihydroxy-2,3-pentadione (DPD). The protein is S-ribosylhomocysteine lyase of Escherichia coli O81 (strain ED1a).